The primary structure comprises 120 residues: UPF0231 protein ETA_08290 (120 aa).

Belongs to the UPF0231 family.

This Erwinia tasmaniensis (strain DSM 17950 / CFBP 7177 / CIP 109463 / NCPPB 4357 / Et1/99) protein is UPF0231 protein ETA_08290.